The primary structure comprises 49 residues: Large ribosomal subunit protein bL33A (49 aa).

This sequence belongs to the bacterial ribosomal protein bL33 family.

This is Large ribosomal subunit protein bL33A from Lactobacillus delbrueckii subsp. bulgaricus (strain ATCC 11842 / DSM 20081 / BCRC 10696 / JCM 1002 / NBRC 13953 / NCIMB 11778 / NCTC 12712 / WDCM 00102 / Lb 14).